Reading from the N-terminus, the 912-residue chain is Bifunctional uridylyltransferase/uridylyl-removing enzyme (912 aa).

The segment at M1–K369 is uridylyltransferase. Residues K370–T722 form a uridylyl-removing region. The 123-residue stretch at V486–L608 folds into the HD domain. ACT domains are found at residues L723–Q802 and V834–A912.

This sequence belongs to the GlnD family. Mg(2+) is required as a cofactor.

The enzyme catalyses [protein-PII]-L-tyrosine + UTP = [protein-PII]-uridylyl-L-tyrosine + diphosphate. It carries out the reaction [protein-PII]-uridylyl-L-tyrosine + H2O = [protein-PII]-L-tyrosine + UMP + H(+). Uridylyltransferase (UTase) activity is inhibited by glutamine, while glutamine activates uridylyl-removing (UR) activity. Modifies, by uridylylation and deuridylylation, the PII regulatory proteins (GlnB and homologs), in response to the nitrogen status of the cell that GlnD senses through the glutamine level. Under low glutamine levels, catalyzes the conversion of the PII proteins and UTP to PII-UMP and PPi, while under higher glutamine levels, GlnD hydrolyzes PII-UMP to PII and UMP (deuridylylation). Thus, controls uridylylation state and activity of the PII proteins, and plays an important role in the regulation of nitrogen assimilation and metabolism. The chain is Bifunctional uridylyltransferase/uridylyl-removing enzyme from Novosphingobium aromaticivorans (strain ATCC 700278 / DSM 12444 / CCUG 56034 / CIP 105152 / NBRC 16084 / F199).